The primary structure comprises 80 residues: Exodeoxyribonuclease 7 small subunit (80 aa).

The protein belongs to the XseB family. As to quaternary structure, heterooligomer composed of large and small subunits.

Its subcellular location is the cytoplasm. It catalyses the reaction Exonucleolytic cleavage in either 5'- to 3'- or 3'- to 5'-direction to yield nucleoside 5'-phosphates.. In terms of biological role, bidirectionally degrades single-stranded DNA into large acid-insoluble oligonucleotides, which are then degraded further into small acid-soluble oligonucleotides. This Vibrio vulnificus (strain CMCP6) protein is Exodeoxyribonuclease 7 small subunit.